A 142-amino-acid polypeptide reads, in one-letter code: Large-conductance mechanosensitive channel (142 aa).

The next 3 helical transmembrane spans lie at 15 to 35 (AFVMRGNVVDLAVGVIIGAAF), 38 to 58 (IVTSLVNDIFMPIIGMIIGNI), and 82 to 102 (GMFIQEIVNFLIIALCVFVAI).

Belongs to the MscL family. In terms of assembly, homopentamer.

The protein resides in the cell inner membrane. Its function is as follows. Channel that opens in response to stretch forces in the membrane lipid bilayer. May participate in the regulation of osmotic pressure changes within the cell. The protein is Large-conductance mechanosensitive channel of Fusobacterium nucleatum subsp. nucleatum (strain ATCC 25586 / DSM 15643 / BCRC 10681 / CIP 101130 / JCM 8532 / KCTC 2640 / LMG 13131 / VPI 4355).